Reading from the N-terminus, the 477-residue chain is MGRTVVVLGGGISGLAASYHLSRAPCPPKVVLVEGSERLGGWIRSVRGPNGAIFELGPRGIRPAGALGARTLLLVSELGLDSEVLPVRGDHPAAQNRFLYVGGALHALPTGLRGLLRPSPPFSKPLFWAGLRELTKPRGKEPDETVHSFAQRRLGPEVASLAMDSLCRGVFAGNSRELSIRSCFPSLFQAEQTHRSVLLGLLLGAGRTPQPDSALIRQALAERWSQWSLRGGLEMLPQALETHLTSRGVSVLRGQPVCGLSLQAEGRWKVSLRDSSLEADHVISAIPASVLSELLPAEAAPLARALSAITAVSVAVVNLQYQGAHLPVQGFGHLVPSSEDPGVLGIVYDSVAFPEQDGSPPGLRVTVMLGGSWLQTLEASGCVLSQELFQQRAQEAAAAQLGLKELPSHCLVHLHKNCIPQYTLGHWQKLESARQFLAAHRLPLTLAGASYEGVAVNDCIESGRQAAVSVLGTEPNG.

FAD contacts are provided by residues 9–14 (GGGISG), W42, 57–60 (GPRG), V257, A449, and 454–456 (VAV).

Belongs to the protoporphyrinogen/coproporphyrinogen oxidase family. Protoporphyrinogen oxidase subfamily. In terms of assembly, monomer. Homodimer. FAD serves as cofactor.

Its subcellular location is the mitochondrion inner membrane. The catalysed reaction is protoporphyrinogen IX + 3 O2 = protoporphyrin IX + 3 H2O2. It functions in the pathway porphyrin-containing compound metabolism; protoporphyrin-IX biosynthesis; protoporphyrin-IX from protoporphyrinogen-IX: step 1/1. Its function is as follows. Catalyzes the 6-electron oxidation of protoporphyrinogen-IX to form protoporphyrin-IX. This Macaca fascicularis (Crab-eating macaque) protein is Protoporphyrinogen oxidase (PPOX).